Here is a 511-residue protein sequence, read N- to C-terminus: Apolipoprotein N-acyltransferase (511 aa).

Transmembrane regions (helical) follow at residues 7–25 (PGWP…TPLA), 58–78 (GWWY…VSIH), 90–110 (FLML…AWLW), 125–145 (LAFA…LTGF), 163–183 (VPVG…ALLV), and 192–212 (GASL…GLYL). The region spanning 230 to 470 (IQGNIAQELK…QGILRGEVIP (241 aa)) is the CN hydrolase domain. Glu-269 (proton acceptor) is an active-site residue. The active site involves Lys-330. Catalysis depends on Cys-382, which acts as the Nucleophile. A helical transmembrane segment spans residues 478 to 498 (LQYRVWPLAGLAGVLLLWALL).

It belongs to the CN hydrolase family. Apolipoprotein N-acyltransferase subfamily.

The protein localises to the cell inner membrane. It catalyses the reaction N-terminal S-1,2-diacyl-sn-glyceryl-L-cysteinyl-[lipoprotein] + a glycerophospholipid = N-acyl-S-1,2-diacyl-sn-glyceryl-L-cysteinyl-[lipoprotein] + a 2-acyl-sn-glycero-3-phospholipid + H(+). It participates in protein modification; lipoprotein biosynthesis (N-acyl transfer). Functionally, catalyzes the phospholipid dependent N-acylation of the N-terminal cysteine of apolipoprotein, the last step in lipoprotein maturation. This chain is Apolipoprotein N-acyltransferase, found in Pseudomonas paraeruginosa (strain DSM 24068 / PA7) (Pseudomonas aeruginosa (strain PA7)).